Reading from the N-terminus, the 102-residue chain is uncharacterized protein (102 aa).

A helical transmembrane segment spans residues Ile-29–Tyr-52.

The protein localises to the membrane. This is an uncharacterized protein from Saccharomyces cerevisiae (strain ATCC 204508 / S288c) (Baker's yeast).